The following is a 453-amino-acid chain: Probable glucan endo-1,3-beta-glucosidase eglC (453 aa).

The signal sequence occupies residues 1-18 (MQTRQLLALALAVAATEA). Glu-128 serves as the catalytic Proton donor. N-linked (GlcNAc...) asparagine glycosylation is present at Asn-183. Glu-239 (nucleophile) is an active-site residue. 3 N-linked (GlcNAc...) asparagine glycosylation sites follow: Asn-364, Asn-368, and Asn-376. Polar residues predominate over residues 370 to 380 (TYPGSWNSTRP). Residues 370–423 (TYPGSWNSTRPGANGGSSGSSGSSGSSGSSGSSGSSGSGASGHSSSTGSSSFPS) are disordered. Composition is skewed to low complexity over residues 389–402 (SSGS…SGSS) and 410–423 (SGHS…SFPS). The GPI-anchor amidated asparagine moiety is linked to residue Asn-430. Positions 431–453 (SASGLSGSLFGAVAAVFVALAAL) are cleaved as a propeptide — removed in mature form.

It belongs to the glycosyl hydrolase 17 family. Post-translationally, the GPI-anchor is attached to the protein in the endoplasmic reticulum and serves to target the protein to the cell surface. There, the glucosamine-inositol phospholipid moiety is cleaved off and the GPI-modified mannoprotein is covalently attached via its lipidless GPI glycan remnant to the 1,6-beta-glucan of the outer cell wall layer.

It localises to the cell membrane. The protein resides in the secreted. It is found in the cell wall. It catalyses the reaction Hydrolysis of (1-&gt;3)-beta-D-glucosidic linkages in (1-&gt;3)-beta-D-glucans.. Its function is as follows. Glucanases play a role in cell expansion during growth, in cell-cell fusion during mating, and in spore release during sporulation. This enzyme may be involved in beta-glucan degradation and also function biosynthetically as a transglycosylase. The polypeptide is Probable glucan endo-1,3-beta-glucosidase eglC (eglC) (Aspergillus clavatus (strain ATCC 1007 / CBS 513.65 / DSM 816 / NCTC 3887 / NRRL 1 / QM 1276 / 107)).